Consider the following 118-residue polypeptide: MEFAPIFVYLVISLLLSLILIGVSFLFASSSSLAYPEKLSAYECGFDPFDDARSRFDIRFYLVSILFIIFDLEVTFLFPWAVSLNKIGLFGFWSMMVFLFILTIGFVYEWKKGALDWE.

3 helical membrane-spanning segments follow: residues 6–26 (IFVYLVISLLLSLILIGVSFL), 62–82 (LVSILFIIFDLEVTFLFPWAV), and 87–107 (IGLFGFWSMMVFLFILTIGFV).

The protein belongs to the complex I subunit 3 family.

Its subcellular location is the mitochondrion membrane. It carries out the reaction a ubiquinone + NADH + 5 H(+)(in) = a ubiquinol + NAD(+) + 4 H(+)(out). Functionally, core subunit of the mitochondrial membrane respiratory chain NADH dehydrogenase (Complex I) that is believed to belong to the minimal assembly required for catalysis. Complex I functions in the transfer of electrons from NADH to the respiratory chain. The immediate electron acceptor for the enzyme is believed to be ubiquinone. The sequence is that of NADH-ubiquinone oxidoreductase chain 3 (ND3) from Marchantia polymorpha (Common liverwort).